A 544-amino-acid polypeptide reads, in one-letter code: O-phosphoserine--tRNA(Cys) ligase (544 aa).

Substrate is bound by residues 194–196 (HMT), 239–241 (SAS), 281–282 (YY), and Asn-335.

Belongs to the class-II aminoacyl-tRNA synthetase family. O-phosphoseryl-tRNA(Cys) synthetase subfamily. As to quaternary structure, homotetramer. Interacts with SepCysS.

It carries out the reaction tRNA(Cys) + O-phospho-L-serine + ATP = O-phospho-L-seryl-tRNA(Cys) + AMP + diphosphate. Catalyzes the attachment of O-phosphoserine (Sep) to tRNA(Cys). This Methanopyrus kandleri (strain AV19 / DSM 6324 / JCM 9639 / NBRC 100938) protein is O-phosphoserine--tRNA(Cys) ligase.